Here is a 226-residue protein sequence, read N- to C-terminus: Cytidylate kinase (226 aa).

An ATP-binding site is contributed by 10–18; sequence GPASSGKST.

It belongs to the cytidylate kinase family. Type 1 subfamily.

It localises to the cytoplasm. It carries out the reaction CMP + ATP = CDP + ADP. The catalysed reaction is dCMP + ATP = dCDP + ADP. The polypeptide is Cytidylate kinase (Streptococcus equi subsp. equi (strain 4047)).